The chain runs to 37 residues: Omega-sparatoxin-Hv1a (37 aa).

Cystine bridges form between cysteine 4-cysteine 18, cysteine 11-cysteine 23, and cysteine 17-cysteine 33.

As to expression, expressed by the venom gland.

The protein resides in the secreted. Blocks calcium channels (Cav). This chain is Omega-sparatoxin-Hv1a, found in Heteropoda venatoria (Brown huntsman spider).